Consider the following 985-residue polypeptide: SWI/SNF complex subunit SWI3D (985 aa).

Positions 1 to 55 (MEEKRRDSAGTLAFAGSSGDSPASEPMPAPRRRGGGLKRKANALGGSNFFSSAPS) are disordered. Residues 30-41 (PRRRGGGLKRKA) are compositionally biased toward basic residues. The stretch at 108–133 (EKPKEEEERNKAIREWEALEAKIEAD) forms a coiled coil. The 98-residue stretch at 145-242 (HVVPNHCGWF…FHPFPPTDTG (98 aa)) folds into the SWIRM domain. The ZZ-type; degenerate zinc finger occupies 305-359 (AVEYHCNSCSADCSRKRYHCPKQADFDLCTECFNSGKFSSDMSSSDFILMEPAEA). Residues cysteine 310, cysteine 313, cysteine 333, and cysteine 336 each contribute to the Zn(2+) site. The SANT domain occupies 362-413 (VGSGKWTDQETLLLLEALEIFKENWNEIAEHVATKTKAQCMLHFLQMPIEDA). Composition is skewed to basic and acidic residues over residues 428–464 (TTDL…KEVP), 493–502 (AEQKTPKLET), and 615–661 (DNSH…EKQP). Disordered regions lie at residues 428–502 (TTDL…KLET) and 591–814 (EDPP…EGKK). Residues 662 to 671 (GSRTENSTTK) are compositionally biased toward polar residues. The segment covering 703–724 (CSGKELQEPLKDGNKLSSENKD) has biased composition (basic and acidic residues). Residues 725-736 (ASQSTVSQSAAD) show a composition bias toward polar residues. Residues 742 to 776 (ASRDVEMKDTLQSEKDPEDVVKTVGEKVQLAKEEG) show a composition bias toward basic and acidic residues. Polar residues predominate over residues 780–800 (VLSTPDKSVSQQPIGSASAPE). The stretch at 839–900 (ISAAAVKAKN…EQLERSRQRL (62 aa)) forms a coiled coil. The disordered stretch occupies residues 944-985 (MAFPRPPMPRPPGFPVPGSFVAATTMTGSSDPSPGSDNVSSV). Pro residues predominate over residues 947–958 (PRPPMPRPPGFP). Residues 965–985 (AATTMTGSSDPSPGSDNVSSV) are compositionally biased toward polar residues.

Interacts with SWI3B, but not with BSH. Component of a RNA-directed DNA methylation (RdDM) complex that contains at least MORC6, MORC1/CRT1, MORC2, SWI3D and SUVH9. Interacts with MORC6 and SUVH9. As to expression, ubiquitously expressed.

The protein resides in the nucleus. Component of a multiprotein complex equivalent of the SWI/SNF complex, an ATP-dependent chromatin-remodeling complex, which is required for the positive and negative regulation of gene expression of a large number of genes. It changes chromatin structure by altering DNA-histone contacts within a nucleosome, leading eventually to a change in nucleosome position, thus facilitating or repressing binding of gene-specific transcription factors. The polypeptide is SWI/SNF complex subunit SWI3D (SWI3D) (Arabidopsis thaliana (Mouse-ear cress)).